The primary structure comprises 300 residues: Cation-efflux pump FieF (300 aa).

The next 4 membrane-spanning stretches (helical) occupy residues 12–32, 40–60, 82–102, and 114–134; these read AALS…FAWW, LAAL…LFVV, AALA…LTGF, and PGLG…LVTF. Positions 45 and 49 each coordinate Zn(2+). His153 and Asp157 together coordinate Zn(2+). Residues 164 to 184 form a helical membrane-spanning segment; sequence ILIALALSWYGFHRADALFAL.

Belongs to the cation diffusion facilitator (CDF) transporter (TC 2.A.4) family. FieF subfamily. Homodimer.

It is found in the cell inner membrane. It carries out the reaction Zn(2+)(in) + H(+)(out) = Zn(2+)(out) + H(+)(in). The catalysed reaction is Cd(2+)(in) + H(+)(out) = Cd(2+)(out) + H(+)(in). It catalyses the reaction Fe(2+)(in) + H(+)(out) = Fe(2+)(out) + H(+)(in). Its function is as follows. Divalent metal cation transporter which exports Zn(2+), Cd(2+) and possibly Fe(2+). May be involved in zinc and iron detoxification by efflux. The chain is Cation-efflux pump FieF from Yersinia enterocolitica serotype O:8 / biotype 1B (strain NCTC 13174 / 8081).